We begin with the raw amino-acid sequence, 87 residues long: DNA-directed RNA polymerase subunit omega (87 aa).

The protein belongs to the RNA polymerase subunit omega family. The RNAP catalytic core consists of 2 alpha, 1 beta, 1 beta' and 1 omega subunit. When a sigma factor is associated with the core the holoenzyme is formed, which can initiate transcription.

It catalyses the reaction RNA(n) + a ribonucleoside 5'-triphosphate = RNA(n+1) + diphosphate. In terms of biological role, promotes RNA polymerase assembly. Latches the N- and C-terminal regions of the beta' subunit thereby facilitating its interaction with the beta and alpha subunits. In Alcanivorax borkumensis (strain ATCC 700651 / DSM 11573 / NCIMB 13689 / SK2), this protein is DNA-directed RNA polymerase subunit omega.